We begin with the raw amino-acid sequence, 252 residues long: Probable transcriptional regulator SauR (252 aa).

The HTH iclR-type domain occupies 6 to 68 (NAAAVRAFRI…AGNRHYECSS (63 aa)). A DNA-binding region (H-T-H motif) is located at residues 28–47 (LAAIVQAIELPKQTVHRILK). Residues 83–252 (PAAARHAILQ…ADEMVKTFCE (170 aa)) form the IclR-ED domain.

May regulate transcription of the sauSTU operon. This is Probable transcriptional regulator SauR (sauR) from Cupriavidus necator (strain ATCC 17699 / DSM 428 / KCTC 22496 / NCIMB 10442 / H16 / Stanier 337) (Ralstonia eutropha).